Reading from the N-terminus, the 187-residue chain is MASTTLSIATTIRSSSPLTSASTHHFLSKPTAIEFPFRLSSSSSHRAINLRPISAVEAPEKIEKIGSEISSLTLEEARILVDYLQDKFGVSPLSLAPAAAAVAAPADGGAAAVVEEQTEFDVVINEVPSSSRIAVIKAVRALTSLALKEAKELIEGLPKKFKEGITKDEAEEAKKTLEEAGAKVSIA.

A chloroplast-targeting transit peptide spans 1–54 (MASTTLSIATTIRSSSPLTSASTHHFLSKPTAIEFPFRLSSSSSHRAINLRPIS).

Belongs to the bacterial ribosomal protein bL12 family.

Its subcellular location is the plastid. It localises to the chloroplast. The protein is Large ribosomal subunit protein bL12cx (RPL12C) of Arabidopsis thaliana (Mouse-ear cress).